The following is a 194-amino-acid chain: MIKVEDILRAYRHGFFPMADSREGTVSWCQPYQRAVVPLDTFRPSRSLRRVIDEGQFTIKTNTAFEKVIRACALPRAVEKETWISEEIIEVFLKLHRLGLAHSVESWQNGELAGGLYGLSMGGAFFGESMFFFERDASKVAFAWLVGYLRKKGFSLLDAQIMNPHLESLGAIEIPHEEYMLRLEHALAKKIFFI.

Belongs to the L/F-transferase family.

The protein localises to the cytoplasm. It catalyses the reaction N-terminal L-lysyl-[protein] + L-leucyl-tRNA(Leu) = N-terminal L-leucyl-L-lysyl-[protein] + tRNA(Leu) + H(+). The enzyme catalyses N-terminal L-arginyl-[protein] + L-leucyl-tRNA(Leu) = N-terminal L-leucyl-L-arginyl-[protein] + tRNA(Leu) + H(+). It carries out the reaction L-phenylalanyl-tRNA(Phe) + an N-terminal L-alpha-aminoacyl-[protein] = an N-terminal L-phenylalanyl-L-alpha-aminoacyl-[protein] + tRNA(Phe). In terms of biological role, functions in the N-end rule pathway of protein degradation where it conjugates Leu, Phe and, less efficiently, Met from aminoacyl-tRNAs to the N-termini of proteins containing an N-terminal arginine or lysine. This chain is Leucyl/phenylalanyl-tRNA--protein transferase, found in Chlorobaculum parvum (strain DSM 263 / NCIMB 8327) (Chlorobium vibrioforme subsp. thiosulfatophilum).